We begin with the raw amino-acid sequence, 683 residues long: Zinc finger protein 510 (683 aa).

Positions 46–117 constitute a KRAB domain; it reads VSFKDVTIEF…EEEFSNQSHP (72 aa). The segment at 254–276 adopts a C2H2-type 1; degenerate zinc-finger fold; it reads FECNKIGKAFNDKANCVKHNSSH. 9 consecutive C2H2-type zinc fingers follow at residues 404-426, 432-454, 460-482, 488-510, 516-538, 544-566, 572-594, 600-622, and 628-650; these read YKCN…QRTH, FECS…QRIH, YKCN…QRIH, YECS…HRIH, FQCN…QRTH, YQCN…QKTH, and FKCN…QRIH.

The protein belongs to the krueppel C2H2-type zinc-finger protein family.

It is found in the nucleus. Functionally, may be involved in transcriptional regulation. This Homo sapiens (Human) protein is Zinc finger protein 510 (ZNF510).